Reading from the N-terminus, the 734-residue chain is Photosystem I P700 chlorophyll a apoprotein A2 (734 aa).

A run of 8 helical transmembrane segments spans residues isoleucine 46–alanine 69, leucine 135–glutamine 158, leucine 175–isoleucine 199, isoleucine 273–tyrosine 291, leucine 330–tyrosine 353, alanine 369–valine 395, alanine 417–histidine 439, and phenylalanine 517–valine 535. The [4Fe-4S] cluster site is built by cysteine 559 and cysteine 568. The next 2 membrane-spanning stretches (helical) occupy residues alanine 575–tryptophan 596 and leucine 643–isoleucine 665. Residues histidine 654, methionine 662, and tyrosine 670 each contribute to the chlorophyll a site. Tryptophan 671 is a phylloquinone binding site. Residues leucine 707–alanine 727 traverse the membrane as a helical segment.

The protein belongs to the PsaA/PsaB family. As to quaternary structure, the PsaA/B heterodimer binds the P700 chlorophyll special pair and subsequent electron acceptors. PSI consists of a core antenna complex that captures photons, and an electron transfer chain that converts photonic excitation into a charge separation. The eukaryotic PSI reaction center is composed of at least 11 subunits. P700 is a chlorophyll a/chlorophyll a' dimer, A0 is one or more chlorophyll a, A1 is one or both phylloquinones and FX is a shared 4Fe-4S iron-sulfur center. serves as cofactor.

The protein resides in the plastid. The protein localises to the chloroplast thylakoid membrane. The catalysed reaction is reduced [plastocyanin] + hnu + oxidized [2Fe-2S]-[ferredoxin] = oxidized [plastocyanin] + reduced [2Fe-2S]-[ferredoxin]. In terms of biological role, psaA and PsaB bind P700, the primary electron donor of photosystem I (PSI), as well as the electron acceptors A0, A1 and FX. PSI is a plastocyanin/cytochrome c6-ferredoxin oxidoreductase, converting photonic excitation into a charge separation, which transfers an electron from the donor P700 chlorophyll pair to the spectroscopically characterized acceptors A0, A1, FX, FA and FB in turn. Oxidized P700 is reduced on the lumenal side of the thylakoid membrane by plastocyanin or cytochrome c6. The chain is Photosystem I P700 chlorophyll a apoprotein A2 from Cyanidium caldarium (Red alga).